We begin with the raw amino-acid sequence, 277 residues long: Phosphatidylglycerol--prolipoprotein diacylglyceryl transferase (277 aa).

3 helical membrane-spanning segments follow: residues 16 to 36 (FFQI…FYFL), 62 to 82 (LLFF…VLFY), and 101 to 121 (GMAF…FAHL). R145 contributes to the a 1,2-diacyl-sn-glycero-3-phospho-(1'-sn-glycerol) binding site. The next 2 membrane-spanning stretches (helical) occupy residues 214-234 (PIWG…RFIA) and 243-263 (FLGL…PMIV).

It belongs to the Lgt family.

The protein resides in the cell inner membrane. The enzyme catalyses L-cysteinyl-[prolipoprotein] + a 1,2-diacyl-sn-glycero-3-phospho-(1'-sn-glycerol) = an S-1,2-diacyl-sn-glyceryl-L-cysteinyl-[prolipoprotein] + sn-glycerol 1-phosphate + H(+). It functions in the pathway protein modification; lipoprotein biosynthesis (diacylglyceryl transfer). Functionally, catalyzes the transfer of the diacylglyceryl group from phosphatidylglycerol to the sulfhydryl group of the N-terminal cysteine of a prolipoprotein, the first step in the formation of mature lipoproteins. The chain is Phosphatidylglycerol--prolipoprotein diacylglyceryl transferase from Leptothrix cholodnii (strain ATCC 51168 / LMG 8142 / SP-6) (Leptothrix discophora (strain SP-6)).